The following is a 166-amino-acid chain: RNA polymerase sigma factor SigV (166 aa).

The short motif at 38 to 51 is the Polymerase core binding element; sequence DIVQESIKKALSSV. Residues 131 to 150 constitute a DNA-binding region (H-T-H motif); sequence LEEIAEITGENTNTVKTRLY.

It belongs to the sigma-70 factor family. ECF subfamily. In terms of assembly, interacts with RsiV.

In terms of biological role, sigma factors are initiation factors that promote the attachment of RNA polymerase to specific initiation sites and are then released. Positively regulates the expression of proteins involved in stress responses against bacitracin, paraquat and tellurite. The polypeptide is RNA polymerase sigma factor SigV (sigV) (Bacillus subtilis (strain 168)).